Consider the following 275-residue polypeptide: MANYTAADVKRLRELTGSGMMACKNALAEAEGDFDKAVEQLRIKGAKDVGKRAERTTAEGLVVSKDGVLLELDCETDFVAKNEDFLKLAESIVTVAAAAKPADVDALKALDLDGKTVDTVIQEQSAKIGEKLVLSKIASFDGPVAVYLHKRSADLPPAVGVLVEYTGEGDAAAEAARGAAMQVAALKAKYVTRDEVPEDIVANERHIAEETARAEGKPEQALPKIIEGRVNGYFKDVVLTEQSSVQDSKKSVKAILDEAGVTIKRFVRFEVGASS.

Residues 76–79 are involved in Mg(2+) ion dislocation from EF-Tu; it reads TDFV.

It belongs to the EF-Ts family.

Its subcellular location is the cytoplasm. Associates with the EF-Tu.GDP complex and induces the exchange of GDP to GTP. It remains bound to the aminoacyl-tRNA.EF-Tu.GTP complex up to the GTP hydrolysis stage on the ribosome. This is Elongation factor Ts from Rhodococcus jostii (strain RHA1).